The following is a 542-amino-acid chain: Ribonuclease Y (542 aa).

Residues Met-1–Ala-21 form a helical membrane-spanning segment. The segment at Ser-52–Ala-92 is disordered. Residues Ala-59–Ala-92 are compositionally biased toward basic and acidic residues. The 61-residue stretch at Val-229 to Leu-289 folds into the KH domain. Residues Val-355 to Ala-449 form the HD domain.

This sequence belongs to the RNase Y family.

It localises to the cell membrane. Its function is as follows. Endoribonuclease that initiates mRNA decay. In Cutibacterium acnes (strain DSM 16379 / KPA171202) (Propionibacterium acnes), this protein is Ribonuclease Y.